The following is a 439-amino-acid chain: ATP-dependent RNA helicase RhlB (439 aa).

Residues 9-37 (QKFADLPLHPEVKQALAENGFEFCTPIQA) carry the Q motif motif. The Helicase ATP-binding domain occupies 40–219 (LPVLLQSKDI…YDHMNDPVKV (180 aa)). 53–60 (AQTGTGKT) provides a ligand contact to ATP. The DEAD box signature appears at 165–168 (DEAD). The region spanning 243 to 390 (KMRLLLTLIE…VSNYDSSALL (148 aa)) is the Helicase C-terminal domain. Positions 398–439 (KIPRKHPAGTRNLRERAGAGRPQGAHRSGGRPPRHDRTRRHS) are disordered. Over residues 425–439 (SGGRPPRHDRTRRHS) the composition is skewed to basic residues.

This sequence belongs to the DEAD box helicase family. RhlB subfamily. As to quaternary structure, component of the RNA degradosome, which is a multiprotein complex involved in RNA processing and mRNA degradation.

It localises to the cytoplasm. The enzyme catalyses ATP + H2O = ADP + phosphate + H(+). Its function is as follows. DEAD-box RNA helicase involved in RNA degradation. Has RNA-dependent ATPase activity and unwinds double-stranded RNA. The protein is ATP-dependent RNA helicase RhlB of Shewanella putrefaciens (strain CN-32 / ATCC BAA-453).